The following is a 339-amino-acid chain: Protein FAM76B (339 aa).

At alanine 2 the chain carries N-acetylalanine. Phosphoserine occurs at positions 22 and 148. The interval 144-243 (EQRKSLGSSH…INQSADSGGT (100 aa)) is disordered. The span at 148–160 (SLGSSHSNSSSSS) shows a compositional bias: low complexity. Positions 167-189 (HHPKHHHHHHHHHHRHSSSHHKI) are enriched in basic residues. The residue at position 193 (serine 193) is a Phosphoserine. Threonine 215 is modified (phosphothreonine). The segment covering 215–224 (TPKKKPKLES) has biased composition (basic and acidic residues). Over residues 228-243 (NGDSSSINQSADSGGT) the composition is skewed to polar residues. A coiled-coil region spans residues 248–328 (LISQLKEEVM…QVAALSKGKK (81 aa)).

This sequence belongs to the FAM76 family. Interacts with HNRNPA2B1 (via C-terminus); the interaction results in retention of HNRNPA2B1 in the nucleus and inhibition of the NF-kappa-B-mediated inflammatory pathway.

The protein localises to the nucleus speckle. In terms of biological role, negatively regulates the NF-kappa-B-mediated inflammatory pathway by preventing the translocation of HNRNPA2B1 from the nucleus to the cytoplasm. Inhibits the PI3K/Akt/NF-kappa-B pathway-mediated polarization of M1 macrophages by binding to and stabilizing PIK3CD mRNA, resulting in increased levels of PIK3CD protein and increased levels of phosphorylated downstream target AKT which leads to decreased NF-kappa-B signaling. The sequence is that of Protein FAM76B (FAM76B) from Homo sapiens (Human).